A 916-amino-acid polypeptide reads, in one-letter code: Translation initiation factor IF-2 (916 aa).

The segment covering 151–191 (NLDEQQRLAESDRARDEAIQRKRDEEQAAKDRVEAERKAAE) has biased composition (basic and acidic residues). Disordered stretches follow at residues 151–262 (NLDE…SHVM) and 280–328 (HLSA…ERPT). 2 stretches are compositionally biased toward low complexity: residues 192-243 (EAAA…ATPA) and 293-305 (RGKPTGRPGSSSS). The tr-type G domain maps to 415 to 584 (SRPPVVTIMG…SLQAEVLELK (170 aa)). The tract at residues 424-431 (GHVDHGKT) is G1. 424 to 431 (GHVDHGKT) provides a ligand contact to GTP. A G2 region spans residues 449–453 (GITQH). The segment at 470–473 (DTPG) is G3. Residues 470–474 (DTPGH) and 524–527 (NKID) contribute to the GTP site. The tract at residues 524 to 527 (NKID) is G4. Positions 560 to 562 (SAK) are G5.

It belongs to the TRAFAC class translation factor GTPase superfamily. Classic translation factor GTPase family. IF-2 subfamily.

It localises to the cytoplasm. One of the essential components for the initiation of protein synthesis. Protects formylmethionyl-tRNA from spontaneous hydrolysis and promotes its binding to the 30S ribosomal subunits. Also involved in the hydrolysis of GTP during the formation of the 70S ribosomal complex. The protein is Translation initiation factor IF-2 of Xanthomonas campestris pv. campestris (strain ATCC 33913 / DSM 3586 / NCPPB 528 / LMG 568 / P 25).